A 325-amino-acid polypeptide reads, in one-letter code: Acetyl-coenzyme A carboxylase carboxyl transferase subunit alpha (325 aa).

Positions 43–297 constitute a CoA carboxyltransferase C-terminal domain; it reads ELENNSTQLR…KTSLIAHLRQ (255 aa).

The protein belongs to the AccA family. In terms of assembly, acetyl-CoA carboxylase is a heterohexamer composed of biotin carboxyl carrier protein (AccB), biotin carboxylase (AccC) and two subunits each of ACCase subunit alpha (AccA) and ACCase subunit beta (AccD).

The protein resides in the cytoplasm. It carries out the reaction N(6)-carboxybiotinyl-L-lysyl-[protein] + acetyl-CoA = N(6)-biotinyl-L-lysyl-[protein] + malonyl-CoA. The protein operates within lipid metabolism; malonyl-CoA biosynthesis; malonyl-CoA from acetyl-CoA: step 1/1. Its function is as follows. Component of the acetyl coenzyme A carboxylase (ACC) complex. First, biotin carboxylase catalyzes the carboxylation of biotin on its carrier protein (BCCP) and then the CO(2) group is transferred by the carboxyltransferase to acetyl-CoA to form malonyl-CoA. The sequence is that of Acetyl-coenzyme A carboxylase carboxyl transferase subunit alpha from Cyanothece sp. (strain PCC 7425 / ATCC 29141).